The following is a 74-amino-acid chain: Auswaprin-a (74 aa).

The signal sequence occupies residues 1-24; that stretch reads MSSGGLLLLLGLLTLWGVLTPVSS. One can recognise a WAP domain in the interval 27-71; the sequence is RPKKPGLCPPRPQKPCVKECKNDWSCSGQQKCCNYGCIDECRDPI. Cystine bridges form between C34-C59, C42-C63, C46-C58, and C52-C67.

The protein belongs to the venom waprin family. In terms of tissue distribution, expressed by the venom gland.

It is found in the secreted. Its function is as follows. Damages membranes of susceptible bacteria. Has no hemolytic activity. Not toxic to mice. Does not inhibit the proteinases elastase and cathepsin G. This Pseudechis australis (Mulga snake) protein is Auswaprin-a.